Consider the following 34-residue polypeptide: Beta-theraphotoxin-Pmu1a (34 aa).

Intrachain disulfides connect C3-C18, C10-C23, and C17-C30. At L34 the chain carries Leucine amide.

Belongs to the neurotoxin 10 (Hwtx-1) family. 34 (Jztx-26) subfamily. As to expression, expressed by the venom gland.

The protein localises to the secreted. Spider venom neurotoxin that blocks voltage-gated sodium channels Nav1.3/SCN3A and Nav1.8/SCN10A in human (IC(50)=2 uM and IC(50)=4 uM, respectively) and rat (IC(50)=2 uM and IC(50)=2.5 uM, respectively). This chain is Beta-theraphotoxin-Pmu1a, found in Pterinochilus murinus (Mombasa golden starburst baboon spider).